Consider the following 388-residue polypeptide: Succinate--CoA ligase [ADP-forming] subunit beta (388 aa).

One can recognise an ATP-grasp domain in the interval 9-244 (KQLFQKYGVP…LDEEDPFEIE (236 aa)). ATP-binding positions include lysine 46, 53–55 (GRG), glutamate 99, leucine 102, and glutamate 107. Residues asparagine 199 and aspartate 213 each coordinate Mg(2+). Residues asparagine 265 and 322–324 (GIL) each bind substrate.

This sequence belongs to the succinate/malate CoA ligase beta subunit family. Heterotetramer of two alpha and two beta subunits. It depends on Mg(2+) as a cofactor.

It catalyses the reaction succinate + ATP + CoA = succinyl-CoA + ADP + phosphate. The enzyme catalyses GTP + succinate + CoA = succinyl-CoA + GDP + phosphate. It participates in carbohydrate metabolism; tricarboxylic acid cycle; succinate from succinyl-CoA (ligase route): step 1/1. Functionally, succinyl-CoA synthetase functions in the citric acid cycle (TCA), coupling the hydrolysis of succinyl-CoA to the synthesis of either ATP or GTP and thus represents the only step of substrate-level phosphorylation in the TCA. The beta subunit provides nucleotide specificity of the enzyme and binds the substrate succinate, while the binding sites for coenzyme A and phosphate are found in the alpha subunit. This Syntrophobacter fumaroxidans (strain DSM 10017 / MPOB) protein is Succinate--CoA ligase [ADP-forming] subunit beta.